The sequence spans 412 residues: MSQKTAGKDYLTMDDVELDNKRILLRVDFNSPMDANGNILDDRKIKSHLYTLRSLENSRVVMMSHQGRPGDKDYTTLEAHAKLATELLGRKVTYEDDIFSACARNAIKSLEKGDILLLENTRFYAEENMNRAPEEQARTQMVRKLYPLFDVFINDAFSVSHRSQCSVVGFTEVLPSVAGILMDREITGLDKGLKCHEHPAVFALGGTKAKDIVKVISDILKRGGADRILTTGVVATVFMMAIGIEVGEVNRKFIEDHKYLDQVSIASRLLKEYSGKIIVPKDIALNNDGKREEVKVDKIKGDLPIADIGPETISDYSKFLKEAKLSVFHGPAGIFELESFRLGTEELLKAAAQSNYSIAGGGHTLAAIDQLGLESKYSHLSMGGGASITYLSGEHMPGIEALKNYASRCCKD.

Residues 28–30 (DFN), 65–68 (HQGR), Arg-122, and Arg-162 contribute to the substrate site. ATP contacts are provided by residues Glu-336 and 361 to 364 (GGHT).

This sequence belongs to the phosphoglycerate kinase family. In terms of assembly, monomer.

The protein resides in the cytoplasm. The enzyme catalyses (2R)-3-phosphoglycerate + ATP = (2R)-3-phospho-glyceroyl phosphate + ADP. Its pathway is carbohydrate degradation; glycolysis; pyruvate from D-glyceraldehyde 3-phosphate: step 2/5. This is Phosphoglycerate kinase 1 from Methanosarcina acetivorans (strain ATCC 35395 / DSM 2834 / JCM 12185 / C2A).